A 91-amino-acid polypeptide reads, in one-letter code: UPF0367 protein cce_2199 (91 aa).

Belongs to the UPF0367 family.

This Crocosphaera subtropica (strain ATCC 51142 / BH68) (Cyanothece sp. (strain ATCC 51142)) protein is UPF0367 protein cce_2199.